Reading from the N-terminus, the 235-residue chain is Superoxide dismutase [Mn] 3.1, mitochondrial (235 aa).

Residues 1 to 31 constitute a mitochondrion transit peptide; that stretch reads MALRTLASKKVLSFPFGGAGRPLAAAASARG. Mn(2+)-binding residues include His-59, His-107, Asp-196, and His-200.

The protein belongs to the iron/manganese superoxide dismutase family. As to quaternary structure, homotetramer. Mn(2+) serves as cofactor.

It localises to the mitochondrion matrix. It carries out the reaction 2 superoxide + 2 H(+) = H2O2 + O2. In terms of biological role, destroys superoxide anion radicals which are normally produced within the cells and which are toxic to biological systems. This is Superoxide dismutase [Mn] 3.1, mitochondrial (SODA.4) from Zea mays (Maize).